The chain runs to 219 residues: Probable GTP-binding protein EngB (219 aa).

The region spanning Val31 to Pro205 is the EngB-type G domain. GTP contacts are provided by residues Gly39–Ser46, Gly66–Leu70, Asp84–Gly87, Thr151–Asp154, and Phe184–Ala186. Ser46 and Thr68 together coordinate Mg(2+).

This sequence belongs to the TRAFAC class TrmE-Era-EngA-EngB-Septin-like GTPase superfamily. EngB GTPase family. Requires Mg(2+) as cofactor.

Necessary for normal cell division and for the maintenance of normal septation. The polypeptide is Probable GTP-binding protein EngB (Shewanella sp. (strain W3-18-1)).